The sequence spans 491 residues: Argininosuccinate lyase (491 aa).

This sequence belongs to the lyase 1 family. Argininosuccinate lyase subfamily.

It localises to the cytoplasm. It carries out the reaction 2-(N(omega)-L-arginino)succinate = fumarate + L-arginine. It participates in amino-acid biosynthesis; L-arginine biosynthesis; L-arginine from L-ornithine and carbamoyl phosphate: step 3/3. In Methanococcoides burtonii (strain DSM 6242 / NBRC 107633 / OCM 468 / ACE-M), this protein is Argininosuccinate lyase.